We begin with the raw amino-acid sequence, 415 residues long: von Willebrand factor A domain-containing protein 1 (415 aa).

A signal peptide spans 1–18; the sequence is MLFWTAFSMALSLRLALA. The 176-residue stretch at 34–209 folds into the VWFA domain; that stretch reads DLLFLLDSSA…IIARELRGSI (176 aa). Phosphoserine occurs at positions 74, 80, and 93. Fibronectin type-III domains follow at residues 214–305 and 307–403; these read QPQQ…LQEE and GPER…TRAP. An N-linked (GlcNAc...) asparagine glycan is attached at N264. C369 and C393 are disulfide-bonded. Residues 391-415 are disordered; that stretch reads KACTASGARTRAPQSMRPEAGPREP.

Homodimer or homomultimer; disulfide-linked. Interacts with HSPG2. Post-translationally, N-glycosylated. In terms of tissue distribution, expressed at high levels in the chondrocytes. Detected in the vasculature of neural tissues, in basement membrane structures of the peripheral nervous system, in the apical ectodermal ridge of developing limb buds, and in skeletal and cardiac muscle (at protein level).

It localises to the secreted. The protein localises to the extracellular space. Its subcellular location is the extracellular matrix. It is found in the basement membrane. Functionally, promotes matrix assembly. Involved in the organization of skeletal muscles and in the formation of neuromuscular junctions. This is von Willebrand factor A domain-containing protein 1 (Vwa1) from Mus musculus (Mouse).